We begin with the raw amino-acid sequence, 128 residues long: Small ribosomal subunit protein eS8 (128 aa).

It belongs to the eukaryotic ribosomal protein eS8 family. In terms of assembly, part of the 30S ribosomal subunit.

This Methanococcus maripaludis (strain DSM 14266 / JCM 13030 / NBRC 101832 / S2 / LL) protein is Small ribosomal subunit protein eS8.